The sequence spans 1369 residues: Mediator of RNA polymerase II transcription subunit 23 (1369 aa).

The segment at 1337 to 1369 (TESAAPPPPPMNSGSPAPQPNQVPVSVPLTVTQ) is disordered. Positions 1341-1357 (APPPPPMNSGSPAPQPN) are enriched in pro residues.

Belongs to the Mediator complex subunit 23 family. As to quaternary structure, component of the Mediator complex.

The protein localises to the nucleus. Component of the Mediator complex, a coactivator involved in the regulated transcription of nearly all RNA polymerase II-dependent genes. Mediator functions as a bridge to convey information from gene-specific regulatory proteins to the basal RNA polymerase II transcription machinery. Mediator is recruited to promoters by direct interactions with regulatory proteins and serves as a scaffold for the assembly of a functional preinitiation complex with RNA polymerase II and the general transcription factors. This is Mediator of RNA polymerase II transcription subunit 23 (med23) from Xenopus laevis (African clawed frog).